The following is a 180-amino-acid chain: Crossover junction endodeoxyribonuclease RuvC (180 aa).

Active-site residues include Asp7, Glu66, and Asp138. Positions 7, 66, and 138 each coordinate Mg(2+).

The protein belongs to the RuvC family. Homodimer which binds Holliday junction (HJ) DNA. The HJ becomes 2-fold symmetrical on binding to RuvC with unstacked arms; it has a different conformation from HJ DNA in complex with RuvA. In the full resolvosome a probable DNA-RuvA(4)-RuvB(12)-RuvC(2) complex forms which resolves the HJ. Mg(2+) is required as a cofactor.

The protein localises to the cytoplasm. The enzyme catalyses Endonucleolytic cleavage at a junction such as a reciprocal single-stranded crossover between two homologous DNA duplexes (Holliday junction).. Functionally, the RuvA-RuvB-RuvC complex processes Holliday junction (HJ) DNA during genetic recombination and DNA repair. Endonuclease that resolves HJ intermediates. Cleaves cruciform DNA by making single-stranded nicks across the HJ at symmetrical positions within the homologous arms, yielding a 5'-phosphate and a 3'-hydroxyl group; requires a central core of homology in the junction. The consensus cleavage sequence is 5'-(A/T)TT(C/G)-3'. Cleavage occurs on the 3'-side of the TT dinucleotide at the point of strand exchange. HJ branch migration catalyzed by RuvA-RuvB allows RuvC to scan DNA until it finds its consensus sequence, where it cleaves and resolves the cruciform DNA. The sequence is that of Crossover junction endodeoxyribonuclease RuvC from Paraburkholderia phymatum (strain DSM 17167 / CIP 108236 / LMG 21445 / STM815) (Burkholderia phymatum).